A 1972-amino-acid chain; its full sequence is TP53-binding protein 1 (1972 aa).

3 disordered regions span residues 24 to 273 (DSQP…VAAM), 290 to 332 (QIQK…CSLA), and 346 to 507 (GQRS…LGLS). Residues Ser-25 and Ser-63 each carry the phosphoserine modification. Basic and acidic residues predominate over residues 82–91 (EHLKENKVAD). Polar residues predominate over residues 94-121 (DSSNLDTCGSISQVIEQLPQPNRTSSVL). Phosphoserine occurs at positions 105 and 124. Positions 138-149 (ELEQKEKEKEED) are enriched in basic and acidic residues. Residues 151-168 (SGNTTHSLGAEDTASSQL) show a composition bias toward polar residues. Phosphoserine occurs at positions 166, 176, and 178. The segment covering 195-205 (LQSVTTNSGYT) has biased composition (polar residues). Residue Lys-217 forms a Glycyl lysine isopeptide (Lys-Gly) (interchain with G-Cter in SUMO1); alternate linkage. A Glycyl lysine isopeptide (Lys-Gly) (interchain with G-Cter in SUMO2); alternate cross-link involves residue Lys-217. A phosphoserine mark is found at Ser-222, Ser-265, and Ser-294. Polar residues-rich tracts occupy residues 300–322 (LSTQ…CSTP) and 346–361 (GQRS…NSSD). Phosphothreonine is present on Thr-302. Residues Ser-366, Ser-380, Ser-395, Ser-398, Ser-429, Ser-452, and Ser-464 each carry the phosphoserine modification. The span at 426-441 (STVSPQASTPISQSTP) shows a compositional bias: polar residues. The span at 442 to 452 (VFPPGSLPIPS) shows a compositional bias: pro residues. Residues 481 to 490 (HSSSLTVECS) show a composition bias toward polar residues. A compositionally biased stretch (basic and acidic residues) spans 491–501 (KTSEIEPKNSP). A phosphoserine mark is found at Ser-500, Ser-507, Ser-518, Ser-523, and Ser-525. A compositionally biased stretch (polar residues) spans 520 to 531 (SEYSQSPKMESL). Residues 520–556 (SEYSQSPKMESLSSHRIDEDGENTQIEDTEPMSPVLN) are disordered. The span at 538–549 (EDGENTQIEDTE) shows a compositional bias: acidic residues. A phosphothreonine mark is found at Thr-543 and Thr-548. 3 positions are modified to phosphoserine: Ser-552, Ser-566, and Ser-580. The segment at 568–595 (LMNPAQDGEVQLSQNDDKTKGDDTDTRD) is disordered. The segment covering 582–595 (NDDKTKGDDTDTRD) has biased composition (basic and acidic residues). Phosphoserine occurs at positions 630, 635, 639, and 640. The disordered stretch occupies residues 649–687 (EIKEHHPEEGSSGSEVEEIPETPCESQGEELKEENMESV). A Phosphothreonine modification is found at Thr-670. A phosphoserine mark is found at Ser-692, Ser-724, Ser-727, Ser-771, Ser-809, Ser-830, Ser-831, and Ser-834. Residues 742–911 (EQEAWEEATS…TPFHFTLPKE (170 aa)) are disordered. Residues 798–816 (AENRLDTKEEKSVEYEGDL) are compositionally biased toward basic and acidic residues. Residues 839–848 (RADDPLRLDQ) show a composition bias toward basic and acidic residues. Polar residues predominate over residues 849-864 (ELQQPQTQEKTSNSLT). Thr-855 is subject to Phosphothreonine. A Glycyl lysine isopeptide (Lys-Gly) (interchain with G-Cter in SUMO1); alternate cross-link involves residue Lys-868. A Glycyl lysine isopeptide (Lys-Gly) (interchain with G-Cter in SUMO2); alternate cross-link involves residue Lys-868. Over residues 890 to 902 (HASQSFCESSSET) the composition is skewed to polar residues. A Phosphothreonine modification is found at Thr-922. Lys-930 is covalently cross-linked (Glycyl lysine isopeptide (Lys-Gly) (interchain with G-Cter in SUMO2)). Ser-970 and Ser-975 each carry phosphoserine. Lys-984 participates in a covalent cross-link: Glycyl lysine isopeptide (Lys-Gly) (interchain with G-Cter in SUMO2). Disordered stretches follow at residues 997 to 1028 (EASE…SVAS) and 1045 to 1103 (ENEA…VSPA). A compositionally biased stretch (polar residues) spans 1018–1028 (GSTAVAESVAS). The residue at position 1028 (Ser-1028) is a Phosphoserine. Position 1056 is a phosphothreonine (Thr-1056). The residue at position 1068 (Ser-1068) is a Phosphoserine. Basic and acidic residues predominate over residues 1071–1083 (EEEKEKLEGDHTI). 4 positions are modified to phosphoserine: Ser-1086, Ser-1094, Ser-1101, and Ser-1114. Positions 1127 to 1139 (DQKEGRSTNKENP) are enriched in basic and acidic residues. Disordered regions lie at residues 1127–1148 (DQKE…ERPS), 1188–1232 (NFGK…QPPH), and 1269–1478 (VTEE…DGLD). Position 1148 is a phosphoserine (Ser-1148). Positions 1188–1200 (NFGKQDATVQTER) are enriched in polar residues. Thr-1214 bears the Phosphothreonine mark. Residues Ser-1216 and Ser-1219 each carry the phosphoserine modification. A compositionally biased stretch (acidic residues) spans 1272–1285 (ETEEPIVECQECET). 2 stretches are compositionally biased toward low complexity: residues 1298–1307 (DLGDISSFSS) and 1316–1329 (SSGT…SSGS). Residues Ser-1317 and Ser-1342 each carry the phosphoserine modification. Arg-1355 carries the omega-N-methylarginine modification. Ser-1362 carries the phosphoserine modification. Lys-1365 is covalently cross-linked (Glycyl lysine isopeptide (Lys-Gly) (interchain with G-Cter in SUMO2)). Position 1368 is a phosphoserine (Ser-1368). Thr-1372 is modified (phosphothreonine). The short motif at 1396 to 1403 (RGRGRRGR) is the GAR element. Phosphoserine is present on residues Ser-1426 and Ser-1430. A Glycyl lysine isopeptide (Lys-Gly) (interchain with G-Cter in SUMO1); alternate cross-link involves residue Lys-1434. Lys-1434 is covalently cross-linked (Glycyl lysine isopeptide (Lys-Gly) (interchain with G-Cter in SUMO2); alternate). Ser-1460, Ser-1462, and Ser-1474 each carry phosphoserine. The interval 1484–1603 (NSFVGLRVVA…NRLREQYGLG (120 aa)) is tudor-like. Positions 1495–1523 (WSSNGYFYSGKITRDVGAGKYKLLFDDGY) are interaction with dimethylated histone H4. Lys-1563 participates in a covalent cross-link: Glycyl lysine isopeptide (Lys-Gly) (interchain with G-Cter in SUMO1); alternate. Lys-1563 participates in a covalent cross-link: Glycyl lysine isopeptide (Lys-Gly) (interchain with G-Cter in SUMO2); alternate. The UDR signature appears at 1604–1631 (PYEAVTPLTKAADISLDNLVEGKRKRRS). Thr-1609 carries the phosphothreonine modification. Ser-1618, Ser-1631, and Ser-1635 each carry phosphoserine. Disordered regions lie at residues 1622 to 1719 (LVEG…EEQR) and 1745 to 1768 (LASR…FLEI). Positions 1634–1650 (SSPATPTASSSSSTTPT) are enriched in low complexity. Thr-1638 and Thr-1648 each carry phosphothreonine. Residues Ser-1656, Ser-1673, and Ser-1678 each carry the phosphoserine modification. A Glycyl lysine isopeptide (Lys-Gly) (interchain with G-Cter in ubiquitin) cross-link involves residue Lys-1685. 3 positions are modified to phosphoserine: Ser-1701, Ser-1759, and Ser-1778. BRCT domains follow at residues 1724 to 1848 (LNKT…NYLL) and 1864 to 1964 (PREN…QHPK).

As to quaternary structure, homoligomer. Interacts with p53/TP53 (via the central domain). Interacts with DCLRE1C. Interacts with histone H2AX and this requires phosphorylation of H2AX on 'Ser-139'. Interacts with histone H4 that has been dimethylated at 'Lys-20' (H4K20me2). Has low affinity for histone H4 containing monomethylated 'Lys-20' (H4K20me1). Does not bind histone H4 containing unmethylated or trimethylated 'Lys-20' (H4K20me3). Has low affinity for histone H3 that has been dimethylated on 'Lys-79'. Has very low affinity for histone H3 that has been monomethylated on 'Lys-79' (in vitro). Does not bind unmethylated histone H3. Interacts with histone H2A monoubiquitinated at 'Lys-15' (H2AK15Ub). Interacts with PWWP3A/EXPAND1. Interacts with CHEK2; modulates CHEK2 phosphorylation at 'Thr-68' in response to infrared. Interacts with MSL1; this interaction may be required for MSL1 DNA repair activity, but not for histone acetyltransferase activity. Interacts (when phosphorylated by ATM) with RIF1. Interacts (via the Tudor-like domain) with NUDT16L1/TIRR; interaction masks the Tudor-like domain and prevents recruitment to chromatin. Interacts with PAXIP1. Interacts with SHLD2. Interacts (when phosphorylated) with TOPBP1. Interacts with GFI1; promoting methylation by PRMT1. Interacts with (phosphorylated) DYNLL1; specifically binds DYNLL1 phosphorylated at 'Ser-88' and promotes its recruitment to double stand breaks (DSBs). In terms of assembly, (Microbial infection) Interacts (via C-terminus) with Epstein-Barr virus lytic switch protein BZLF1 (via C-terminus); this interaction is involved in the activation of the viral lytic cycle. In terms of processing, asymmetrically dimethylated on Arg residues by PRMT1. Methylation is required for DNA binding. Post-translationally, phosphorylated at basal level in the absence of DNA damage. Phosphorylated by ATM in response to DNA damage: phosphorylation at different sites promotes interaction with different set of proteins: phosphorylation at the N-terminus by ATM (residues from 6-178) promotes interaction with PAXIP1 and non-homologous end joining (NHEJ) of dysfunctional telomeres. Phosphorylation by ATM at residues that are located more C-terminus (residues 300-650) leads to promote interaction with RIF1. Interaction with RIF1 leads to disrupt interaction with NUDT16L1/TIRR. Phosphorylation at Thr-1609 and Ser-1618 in the UDR motif blocks interaction with H2AK15ub. Dephosphorylated by PPP4C. Hyperphosphorylation during mitosis correlates with its exclusion from chromatin and DNA lesions. Hyperphosphorylated in an ATR-dependent manner in response to DNA damage induced by UV irradiation. Dephosphorylated by PPP5C. Phosphorylation at Ser-366 and Thr-670 promotes interaction with TOPBP1. Phosphorylated by VRK1. Monoubiquitinated at Lys-1685 by MSL2 is reponse to DNA damage, leading to its stabilization.

Its subcellular location is the nucleus. The protein localises to the chromosome. The protein resides in the centromere. It localises to the kinetochore. In terms of biological role, double-strand break (DSB) repair protein involved in response to DNA damage, telomere dynamics and class-switch recombination (CSR) during antibody genesis. Plays a key role in the repair of double-strand DNA breaks (DSBs) in response to DNA damage by promoting non-homologous end joining (NHEJ)-mediated repair of DSBs and specifically counteracting the function of the homologous recombination (HR) repair protein BRCA1. In response to DSBs, phosphorylation by ATM promotes interaction with RIF1 and dissociation from NUDT16L1/TIRR, leading to recruitment to DSBs sites. Recruited to DSBs sites by recognizing and binding histone H2A monoubiquitinated at 'Lys-15' (H2AK15Ub) and histone H4 dimethylated at 'Lys-20' (H4K20me2), two histone marks that are present at DSBs sites. Required for immunoglobulin class-switch recombination (CSR) during antibody genesis, a process that involves the generation of DNA DSBs. Participates in the repair and the orientation of the broken DNA ends during CSR. In contrast, it is not required for classic NHEJ and V(D)J recombination. Promotes NHEJ of dysfunctional telomeres via interaction with PAXIP1. This is TP53-binding protein 1 from Homo sapiens (Human).